The sequence spans 1179 residues: Pesticidal crystal protein Cry1Ad (1179 aa).

Belongs to the delta endotoxin family.

Promotes colloidosmotic lysis by binding to the midgut epithelial cells of many lepidopteran larvae. The sequence is that of Pesticidal crystal protein Cry1Ad (cry1Ad) from Bacillus thuringiensis subsp. aizawai.